A 444-amino-acid chain; its full sequence is Bystin (444 aa).

2 disordered regions span residues 1-37 (MAKKRDRIVNTQPFISDDASVASSRKRSKVPKTHQKQ) and 53-85 (ALAQQKEVADEENAERNPSSAAFAVAGAATAGE). A compositionally biased stretch (basic residues) spans 24–34 (SRKRSKVPKTH). Residues 73–84 (AAFAVAGAATAG) show a composition bias toward low complexity.

The protein belongs to the bystin family. In terms of assembly, component of the 40S pre-ribosome. Highly expressed in flowers and at lower levels in roots, hypocotyls, stems, leaves, siliques and seeds.

It localises to the nucleus. The protein resides in the nucleolus. Its subcellular location is the nucleoplasm. Functionally, essential protein required during embryogenesis and pollen development. Required for processing of 20S pre-rRNA precursor and biogenesis of 40S ribosomal subunits. This Arabidopsis thaliana (Mouse-ear cress) protein is Bystin.